Reading from the N-terminus, the 484-residue chain is tRNA sulfurtransferase (484 aa).

Residues 63-167 (QGIRERLSCM…DQRLFVVHDQ (105 aa)) enclose the THUMP domain. Residues 185-186 (LM), lysine 267, glycine 289, and glutamine 298 contribute to the ATP site. A disulfide bridge connects residues cysteine 346 and cysteine 457. One can recognise a Rhodanese domain in the interval 405-483 (ALAGQVILDI…GHANVRVYRP (79 aa)). Cysteine 457 functions as the Cysteine persulfide intermediate in the catalytic mechanism.

This sequence belongs to the ThiI family.

The protein resides in the cytoplasm. It carries out the reaction [ThiI sulfur-carrier protein]-S-sulfanyl-L-cysteine + a uridine in tRNA + 2 reduced [2Fe-2S]-[ferredoxin] + ATP + H(+) = [ThiI sulfur-carrier protein]-L-cysteine + a 4-thiouridine in tRNA + 2 oxidized [2Fe-2S]-[ferredoxin] + AMP + diphosphate. It catalyses the reaction [ThiS sulfur-carrier protein]-C-terminal Gly-Gly-AMP + S-sulfanyl-L-cysteinyl-[cysteine desulfurase] + AH2 = [ThiS sulfur-carrier protein]-C-terminal-Gly-aminoethanethioate + L-cysteinyl-[cysteine desulfurase] + A + AMP + 2 H(+). It functions in the pathway cofactor biosynthesis; thiamine diphosphate biosynthesis. Its function is as follows. Catalyzes the ATP-dependent transfer of a sulfur to tRNA to produce 4-thiouridine in position 8 of tRNAs, which functions as a near-UV photosensor. Also catalyzes the transfer of sulfur to the sulfur carrier protein ThiS, forming ThiS-thiocarboxylate. This is a step in the synthesis of thiazole, in the thiamine biosynthesis pathway. The sulfur is donated as persulfide by IscS. The sequence is that of tRNA sulfurtransferase from Pseudomonas syringae pv. syringae (strain B728a).